The sequence spans 117 residues: Immunoglobulin lambda variable 1-51 (117 aa).

Positions 1–19 are cleaved as a signal peptide; sequence MTCSPLLLTLLIHCTGSWA. At glutamine 20 the chain carries Pyrrolidone carboxylic acid. A framework-1 region spans residues 20–44; it reads QSVLTQPPSVSAAPGQKVTISCSGS. Residues 20-117 form the Ig-like domain; sequence QSVLTQPPSV…CGTWDSSLSA (98 aa). Cysteine 41 and cysteine 108 are disulfide-bonded. Residues 45–52 are complementarity-determining-1; the sequence is SSNIGNNY. The interval 53–69 is framework-2; that stretch reads VSWYQQLPGTAPKLLIY. Residues 70 to 72 form a complementarity-determining-2 region; it reads DNN. Residues 73-108 are framework-3; sequence KRPSGIPDRFSGSKSGTSATLGITGLQTGDEADYYC. A complementarity-determining-3 region spans residues 109 to 117; that stretch reads GTWDSSLSA.

Immunoglobulins are composed of two identical heavy chains and two identical light chains; disulfide-linked.

It is found in the secreted. It localises to the cell membrane. Its function is as follows. V region of the variable domain of immunoglobulin light chains that participates in the antigen recognition. Immunoglobulins, also known as antibodies, are membrane-bound or secreted glycoproteins produced by B lymphocytes. In the recognition phase of humoral immunity, the membrane-bound immunoglobulins serve as receptors which, upon binding of a specific antigen, trigger the clonal expansion and differentiation of B lymphocytes into immunoglobulins-secreting plasma cells. Secreted immunoglobulins mediate the effector phase of humoral immunity, which results in the elimination of bound antigens. The antigen binding site is formed by the variable domain of one heavy chain, together with that of its associated light chain. Thus, each immunoglobulin has two antigen binding sites with remarkable affinity for a particular antigen. The variable domains are assembled by a process called V-(D)-J rearrangement and can then be subjected to somatic hypermutations which, after exposure to antigen and selection, allow affinity maturation for a particular antigen. This Homo sapiens (Human) protein is Immunoglobulin lambda variable 1-51.